The primary structure comprises 121 residues: Protein VraC (121 aa).

The sequence is that of Protein VraC (vraC) from Staphylococcus aureus (strain MRSA252).